A 163-amino-acid chain; its full sequence is GTP-dependent dephospho-CoA kinase (163 aa).

D38, V39, D57, E115, and D138 together coordinate GTP.

Belongs to the GTP-dependent DPCK family.

The enzyme catalyses 3'-dephospho-CoA + GTP = GDP + CoA + H(+). It participates in cofactor biosynthesis; coenzyme A biosynthesis. Its function is as follows. Catalyzes the GTP-dependent phosphorylation of the 3'-hydroxyl group of dephosphocoenzyme A to form coenzyme A (CoA). In Methanothermobacter thermautotrophicus (strain ATCC 29096 / DSM 1053 / JCM 10044 / NBRC 100330 / Delta H) (Methanobacterium thermoautotrophicum), this protein is GTP-dependent dephospho-CoA kinase.